A 147-amino-acid polypeptide reads, in one-letter code: MKIIIQRVKKAQVSIEGQIQGKINQGLLLLVGVGPEDQEEDLDYAVRKLVNMRIFSDAEGKMNLSVKDIEGEILSISQFTLFADTKRGNRPAFTGAAKPDMASDFYDAFNQKLAQEVPVQTGIFGADMQVELVNNGPVTIILDTKKR.

The short motif at 136–137 is the Gly-cisPro motif, important for rejection of L-amino acids element; it reads GP.

It belongs to the DTD family. Homodimer.

It is found in the cytoplasm. It carries out the reaction glycyl-tRNA(Ala) + H2O = tRNA(Ala) + glycine + H(+). The catalysed reaction is a D-aminoacyl-tRNA + H2O = a tRNA + a D-alpha-amino acid + H(+). Its function is as follows. An aminoacyl-tRNA editing enzyme that deacylates mischarged D-aminoacyl-tRNAs. Also deacylates mischarged glycyl-tRNA(Ala), protecting cells against glycine mischarging by AlaRS. Acts via tRNA-based rather than protein-based catalysis; rejects L-amino acids rather than detecting D-amino acids in the active site. By recycling D-aminoacyl-tRNA to D-amino acids and free tRNA molecules, this enzyme counteracts the toxicity associated with the formation of D-aminoacyl-tRNA entities in vivo and helps enforce protein L-homochirality. This chain is D-aminoacyl-tRNA deacylase, found in Streptococcus pneumoniae serotype 4 (strain ATCC BAA-334 / TIGR4).